Reading from the N-terminus, the 50-residue chain is Defensin D1 (50 aa).

Cystine bridges form between Cys-3-Cys-50, Cys-14-Cys-35, Cys-20-Cys-44, and Cys-24-Cys-46.

In terms of processing, contains 4 disulfide bonds.

Its subcellular location is the secreted. Antimicrobial peptide active against fungi, Gram-positive and Gram-negative bacteria. Inhibits growth of hyphae in the fungi A.niger (IC(50)=3.5 ug/ml), B.sorokiniana (IC(50)=3.0 ug/ml), F.oxysporum (IC(50)=9.5 ug/ml), F.graminearum (IC(50)=6.9 ug/ml), F.culmorum (IC(50)=6.9 ug/ml) and B.cinerea (IC(50)=27.4 ug/ml). Has no effect on spore germination. Destroys spores in germinated conidia by disruption of cell walls and membranes in A.niger and B.sorokiniana. Causes vacuolization of germinated macro- and microconidia in F.oxysporum, F.graminearum and F.culmorum. Strongly inhibits growth of P.infestans on potato tubers above concentrations of 13.6 ug/ml. Inhibits growth of Gram-positive bacteria C.michiganensis and B.subtilis and of Gram-negative bacteria P.syringae, E.carotovora and E.coli. In Nigella sativa (Black cumin), this protein is Defensin D1.